The following is a 264-amino-acid chain: Movement protein (264 aa).

Positions 211-264 (RTKSSKRGPKNNNNLGKGRSGGRPKPKSFDEVEKEFDNLIEDEAETSVADSDSY) are disordered. Basic and acidic residues predominate over residues 237-247 (KSFDEVEKEFD).

Belongs to the tobamovirus movement protein family. Binds to host RBCS at the plasmodesmata; this interaction seems required for viral systemic movement. In resistant plants, interacts with host MBP2C at host microtubules; this interaction prevents virus cell to cell movement. In resistant plants, interacts with host resistance (R) protein (e.g. tomato ToMV resistance protein TM-2(2), AC Q71BG9) at the host plasma membrane; this interaction triggers host defense responses leading to programmed cell death.

The protein resides in the host cytoplasm. It is found in the host cytoskeleton. It localises to the host cell junction. The protein localises to the host plasmodesma. Functionally, transports viral genome to neighboring plant cells directly through plasmosdesmata, without any budding. The movement protein allows efficient cell to cell propagation, by bypassing the host cell wall barrier. Forms a ribonucleoprotein complex with viral RNA. Binds microtubules and modulates microtubule stability. Can bind double-stranded DNA. Triggers host hypersensitive defense reaction in incompatible plants harboring resistance (R) proteins. The protein is Movement protein (MP) of Antirrhinum majus (Garden snapdragon).